The primary structure comprises 288 residues: 33 kDa chaperonin (288 aa).

Intrachain disulfides connect cysteine 235-cysteine 237 and cysteine 268-cysteine 271.

This sequence belongs to the HSP33 family. Under oxidizing conditions two disulfide bonds are formed involving the reactive cysteines. Under reducing conditions zinc is bound to the reactive cysteines and the protein is inactive.

The protein resides in the cytoplasm. In terms of biological role, redox regulated molecular chaperone. Protects both thermally unfolding and oxidatively damaged proteins from irreversible aggregation. Plays an important role in the bacterial defense system toward oxidative stress. The chain is 33 kDa chaperonin from Streptococcus suis (strain 98HAH33).